The sequence spans 99 residues: Small ribosomal subunit protein bS20 (99 aa).

The protein belongs to the bacterial ribosomal protein bS20 family.

In terms of biological role, binds directly to 16S ribosomal RNA. The polypeptide is Small ribosomal subunit protein bS20 (Picosynechococcus sp. (strain ATCC 27264 / PCC 7002 / PR-6) (Agmenellum quadruplicatum)).